Here is a 341-residue protein sequence, read N- to C-terminus: Large ribosomal subunit protein uL3 (341 aa).

Disordered stretches follow at residues M1–S31 and H234–G261.

Belongs to the universal ribosomal protein uL3 family. Part of the 50S ribosomal subunit. Forms a cluster with proteins L14 and L24e.

In terms of biological role, one of the primary rRNA binding proteins, it binds directly near the 3'-end of the 23S rRNA, where it nucleates assembly of the 50S subunit. This chain is Large ribosomal subunit protein uL3, found in Metallosphaera sedula (strain ATCC 51363 / DSM 5348 / JCM 9185 / NBRC 15509 / TH2).